The following is a 102-amino-acid chain: Small ribosomal subunit protein uS10 (102 aa).

Belongs to the universal ribosomal protein uS10 family. In terms of assembly, part of the 30S ribosomal subunit.

Functionally, involved in the binding of tRNA to the ribosomes. This chain is Small ribosomal subunit protein uS10, found in Dehalococcoides mccartyi (strain ATCC BAA-2100 / JCM 16839 / KCTC 5957 / BAV1).